The primary structure comprises 816 residues: H(+)/Cl(-) exchange transporter 5 (816 aa).

The Cytoplasmic portion of the chain corresponds to 1–124 (MAMWQGAMDN…WALIHSVSDA (124 aa)). A run of 2 helical transmembrane segments spans residues 125 to 162 (FSGW…ICTG) and 208 to 231 (VNYF…VKVF). Residues 237–241 (GSGIP) carry the Selectivity filter part_1 motif. Ser238 is a binding site for chloride. Residues 240 to 247 (IPEIKTIL) constitute an intramembrane region (helical). The next 2 membrane-spanning stretches (helical) occupy residues 256–275 (LGKW…VSSG) and 281–300 (EGPL…HCFN). The short motif at 279–283 (GKEGP) is the Selectivity filter part_2 element. 2 intramembrane regions (helical) span residues 312 to 324 (VLSA…VSVA) and 328 to 336 (PIGGVLFSL). The next 5 helical transmembrane spans lie at 348–366 (LWRS…RSIN), 389–414 (LVPF…IAWC), 422–442 (LGKY…ILAF), 498–518 (MWQL…TFGM), and 523–542 (GLFI…LGVG). Residues 523 to 527 (GLFIP) carry the Selectivity filter part_3 motif. Phe525 serves as a coordination point for chloride. The helical intramembrane region spans 570 to 584 (GLYAMVGAAACLGGV). The note=Loop between two helices intramembrane region spans 585–587 (TRM). An intramembrane region (helical) is located at residues 588 to 599 (TVSLVVIMFELT). An intramembrane region (note=Loop between two helices) is located at residues 600-604 (GGLEY). A helical transmembrane segment spans residues 605-622 (IVPLMAAAMTSKWVADAL). Over 623–816 (GREGIYDAHI…NQDPDSILFN (194 aa)) the chain is Cytoplasmic. Tyr628 contacts chloride. CBS domains are found at residues 656-720 (MKPR…ARKK) and 752-812 (ILDL…DPDS). Residues Thr666, 687–689 (YSG), and 794–797 (TKKD) each bind ATP.

Belongs to the chloride channel (TC 2.A.49) family. ClC-5/CLCN5 subfamily. Interacts with NEDD4 and NEDD4L. Ubiquitinated by NEDD4L in the presence of albumin; which promotes endocytosis and proteasomal degradation.

The protein localises to the golgi apparatus membrane. It localises to the endosome membrane. Its subcellular location is the cell membrane. The catalysed reaction is 2 chloride(in) + H(+)(out) = 2 chloride(out) + H(+)(in). Functionally, proton-coupled chloride transporter. Functions as antiport system and exchanges chloride ions against protons. Important for normal acidification of the endosome lumen. May play an important role in renal tubular function. The CLC channel family contains both chloride channels and proton-coupled anion transporters that exchange chloride or another anion for protons. The absence of conserved gating glutamate residues is typical for family members that function as channels. This is H(+)/Cl(-) exchange transporter 5 (CLCN5) from Pongo abelii (Sumatran orangutan).